Reading from the N-terminus, the 185-residue chain is Adenine phosphoribosyltransferase (185 aa).

It belongs to the purine/pyrimidine phosphoribosyltransferase family. In terms of assembly, homodimer.

It is found in the cytoplasm. It catalyses the reaction AMP + diphosphate = 5-phospho-alpha-D-ribose 1-diphosphate + adenine. It participates in purine metabolism; AMP biosynthesis via salvage pathway; AMP from adenine: step 1/1. Catalyzes a salvage reaction resulting in the formation of AMP, that is energically less costly than de novo synthesis. The chain is Adenine phosphoribosyltransferase from Shewanella denitrificans (strain OS217 / ATCC BAA-1090 / DSM 15013).